The sequence spans 148 residues: Sporulation inhibitor of replication protein SirA (148 aa).

It belongs to the SirA family. As to quaternary structure, interacts with DnaA. Forms a 1:1 complex with domain I of DnaA.

The protein resides in the cytoplasm. In terms of biological role, inhibits DNA replication initiation during sporulation, preventing overinitiation and thus enforcing diploidy; probably the main regulator of sporulation replication initiation under Spo0A control. During sporulation SirA prevents DnaA association with the replication origin to prevent excessive chromosome replication. Alternatively SirA binds to domain I of DnaA and prevent its interaction with DnaD, preventing DNA replication initiation. Upon ectopic expression during vegetative growth reduces chromosome copy number, leading to elongated cells with that can have a single nucleoid or be anucleate. Ectopic expression during vegetative growth blocks DnaA at oriC while blocking recruitment of DnaD to oriC. Plays a significant role during the onset of sporulation. The protein is Sporulation inhibitor of replication protein SirA of Bacillus subtilis (strain 168).